The primary structure comprises 417 residues: Pre-mRNA-splicing factor PRP46 (417 aa).

7 WD repeats span residues 119-159 (AHQG…LKAT), 162-201 (GHIMGVRSLAVSSRYPYLFSGSEDKTVKCWDLERTNSSSG), 209-248 (GHVGGIYAMALHPELDLLFTGGRDSVIRVWDLRSRTEIMV), 251-290 (GHRSDITSIASQIGDPQIITSSMDATIRLWDIRKATTQLA), 293-334 (HHSK…NEFG), 337-376 (GENKIINTLSINPSNNTLFSGYDDGRMEFYDYVSGDLLQS), and 385-417 (STESAIYASTFDMSGLRLITCEGDKSIKIWGEE).

It belongs to the WD repeat PRL1/PRL2 family. In terms of assembly, associated with the spliceosome.

Its subcellular location is the cytoplasm. The protein localises to the nucleus. Functionally, involved in pre-mRNA splicing and required for cell cycle progression at G2/M. In Debaryomyces hansenii (strain ATCC 36239 / CBS 767 / BCRC 21394 / JCM 1990 / NBRC 0083 / IGC 2968) (Yeast), this protein is Pre-mRNA-splicing factor PRP46 (PRP46).